The primary structure comprises 257 residues: Homeobox protein ceh-36 (257 aa).

Residues 33-49 are compositionally biased toward low complexity; it reads SATTSSTTMAPMAPNSE. Disordered stretches follow at residues 33–63 and 113–156; these read SATTSSTTMAPMAPNSESGRRAGRRERTSFN and DRNN…GTPE. Positions 55-117 form a DNA-binding region, homeobox; the sequence is GRRERTSFNR…NRRAKDRNNK (63 aa). The span at 123-137 shows a compositional bias: low complexity; sequence HPGSTSSRSSNGSPH.

This sequence belongs to the paired homeobox family. Interacts with sox-2. Expressed in ASE and AWC chemosensory neurons. Expressed left-right asymmetrically in the embryo, in the grandmother cell and the mother cell to the MI pharyngeal motorneuron but in neither analogous precursors of the e3D neuron.

The protein localises to the nucleus. In terms of biological role, probable transcription factor, acting as a progenitor identity factor regulating the development of lineally-related embryonic cells including glial, excretory and neuronal cells. Mediates chemosensory function of ASE and AWC neurons. In ASE neurons, required to diversify the fate of the ASEL neurons from the ASER neurons. Acts cell-autonomously to establish a neuronal left right asymmetry, possibly promoting asymmetric expression of the helix-loop-helix proteins ngn-1 and hlh-2. In cooperation with the transcription factor sox-2, required for the differentiation of AWC olfactory neurons. May regulate the expression of sox-2 in AWC olfactory neurons. This chain is Homeobox protein ceh-36, found in Caenorhabditis elegans.